A 326-amino-acid polypeptide reads, in one-letter code: Bifunctional pinoresinol-lariciresinol reductase (326 aa).

NADP(+) is bound by residues 25-31 (GGTGYLG), arginine 50, and lysine 59. Catalysis depends on lysine 153, which acts as the Proton acceptor. Arginine 157 is an NADP(+) binding site. Residue histidine 285 participates in substrate binding.

Belongs to the NmrA-type oxidoreductase family. Isoflavone reductase subfamily. In terms of assembly, dimer.

It carries out the reaction (+)-lariciresinol + NADP(+) = (+)-pinoresinol + NADPH + H(+). It catalyses the reaction (-)-secoisolariciresinol + NADP(+) = (+)-lariciresinol + NADPH + H(+). Functionally, reductase involved in lignan biosynthesis. Catalyzes the enantioselective conversion of (+)-pinoresinol into (+)-lariciresinol and of (+)-lariciresinol into (-)-secoisolariciresinol. Abstracts the 4R-hydride from the NADPH cofactor during catalysis. The sequence is that of Bifunctional pinoresinol-lariciresinol reductase (PLR1) from Linum album (Flax).